We begin with the raw amino-acid sequence, 276 residues long: MPVRRYKPVTSSTRHRVVIDYKSVITKTEPEKSLLAPLKKSGGRNNAGRISVRFRGGGHKRRYRIIDFKRDKDGIPGKITSIEYDPNRTAFIALVTYADGEKRYILAPDEIEVGDVIISGEEAPIRVGNALPLSKIPTGTTIHNIELYPGRGGQLVRSAGTWAQLMAKEGDYAHVRLPSGEIRLINVKCKATIGRVSNLDHENVSSGKAGRTRWLGRRPQVRGTAMNPVDHPHGGGEGKSPIGHPSPLSPWGWKTLGWKTRRGKKPSDKFIVKRRK.

The disordered stretch occupies residues 203–276 (NVSSGKAGRT…SDKFIVKRRK (74 aa)). Residues 210 to 220 (GRTRWLGRRPQ) show a composition bias toward basic residues. Basic and acidic residues predominate over residues 265 to 276 (KPSDKFIVKRRK).

Belongs to the universal ribosomal protein uL2 family. In terms of assembly, part of the 50S ribosomal subunit. Forms a bridge to the 30S subunit in the 70S ribosome.

Functionally, one of the primary rRNA binding proteins. Required for association of the 30S and 50S subunits to form the 70S ribosome, for tRNA binding and peptide bond formation. It has been suggested to have peptidyltransferase activity; this is somewhat controversial. Makes several contacts with the 16S rRNA in the 70S ribosome. The chain is Large ribosomal subunit protein uL2 from Coprothermobacter proteolyticus (strain ATCC 35245 / DSM 5265 / OCM 4 / BT).